Here is a 106-residue protein sequence, read N- to C-terminus: UPF0449 protein C19orf25 homolog (106 aa).

Belongs to the UPF0449 family.

This Xenopus tropicalis (Western clawed frog) protein is UPF0449 protein C19orf25 homolog.